The primary structure comprises 276 residues: MSVIKCNPTSPGRRHVVKLVNGGLYKGKPYSSLLSKKVANSSKGRNNYGRITMRHIGSGHKQRYRIIDFKRNKDDVFAVVERMEYDPNRSANIALIVYKDGERRYILAPRNLNVGNKIISGLNVPISPGNSLPLSNIPVGSIIHNVEMKVGKGGQLARSAGTYVQIVSRDGEYIILRLRSGEIRKVRCECRATIGEVGNNEHMLRALGKAGASRWRGIRPTVRGTAMNPIDHPHGGGEGKNFGKHPVSPWGVQTKGKRTRSNKRTDKFILCRRKKK.

The interval 224-265 is disordered; sequence GTAMNPIDHPHGGGEGKNFGKHPVSPWGVQTKGKRTRSNKRT.

This sequence belongs to the universal ribosomal protein uL2 family. As to quaternary structure, part of the 50S ribosomal subunit. Forms a bridge to the 30S subunit in the 70S ribosome.

Functionally, one of the primary rRNA binding proteins. Required for association of the 30S and 50S subunits to form the 70S ribosome, for tRNA binding and peptide bond formation. It has been suggested to have peptidyltransferase activity; this is somewhat controversial. Makes several contacts with the 16S rRNA in the 70S ribosome. The protein is Large ribosomal subunit protein uL2 of Blochmanniella floridana.